The following is a 302-amino-acid chain: uncharacterized protein (302 aa).

9 helical membrane-spanning segments follow: residues 3–23 (ILGVGYFLLGLILLYYGSDWF), 39–59 (FVIGATVMAIGTSLPEILTSA), 77–97 (SCICNIGLVLGLSAIISPIIV), 106–126 (LVYLLFVIFAAVIGIDGFSWI), 128–148 (GVVLLILFIIYLRWTVKNGSA), 163–183 (FSLVLLIIGLIGVLVGAELFV), 199–219 (VIGFTLVAFGTSLPELMVSLA), 227–247 (GMVLGNVIGSNIADIGGALAV), and 254–274 (LPAENVQMAVLVIMSLLLYLF).

It belongs to the Ca(2+):cation antiporter (CaCA) (TC 2.A.19) family.

It localises to the cell membrane. This is an uncharacterized protein from Methanocaldococcus jannaschii (strain ATCC 43067 / DSM 2661 / JAL-1 / JCM 10045 / NBRC 100440) (Methanococcus jannaschii).